Consider the following 469-residue polypeptide: MEQLSILDPNKFKHVHFIGIGGISMSGLAEILLNLGFTVSGSDIRSSNITSKLEKKGIKIYTGHSEENIKDADLVVYTAAVKSDNPELAKAKSLGIPTLDRATLLGEIMKKYPFSVAVSGTHGKTTTTSMISLIMLKSALDPTIHIGGELDAIGGNTRIGSNKYFVAEACEYVESFLKFHPYLAVVLNIEADHLDYFKDIEHIKNAFLKFIRLVPENGYVVACADDQNVLSILKDVHCNIITFGLNSKNAMWTAEDISFNENGFAAFTVLKDNERITNIQLKVPGIHNISNALASIAACYALGCSIENIKKGLESYTGIHRRFELKGIENNIKVVDDYAHHPSEIKATLKAARSGNYPRIWTVFQPHTYTRTKFLLDEFSKAFKDTDKVIITDIYSAREKDTGEIHSRILAEKIRENGQDAIYLPDFEGIVEYLKKNASPGDLIITMGAGDVYKVGEMFLKDKQMVAVS.

120–126 (GTHGKTT) is a binding site for ATP.

Belongs to the MurCDEF family.

Its subcellular location is the cytoplasm. The enzyme catalyses UDP-N-acetyl-alpha-D-muramate + L-alanine + ATP = UDP-N-acetyl-alpha-D-muramoyl-L-alanine + ADP + phosphate + H(+). Its pathway is cell wall biogenesis; peptidoglycan biosynthesis. Its function is as follows. Cell wall formation. This Acetivibrio thermocellus (strain ATCC 27405 / DSM 1237 / JCM 9322 / NBRC 103400 / NCIMB 10682 / NRRL B-4536 / VPI 7372) (Clostridium thermocellum) protein is UDP-N-acetylmuramate--L-alanine ligase.